The sequence spans 836 residues: Mediator of RNA polymerase II transcription subunit 25 (836 aa).

Disordered stretches follow at residues 260–285 (IPVT…PVSV), 435–466 (GSGA…VASN), 518–547 (VGQQ…PSSG), and 731–836 (QHQL…GFMG). Polar residues-rich tracts occupy residues 271–282 (SSANGPIQNRQP) and 442–466 (SAQT…VASN). A coiled-coil region spans residues 680–761 (NQQQQQQQQL…QQHQLTQLQH (82 aa)). 2 stretches are compositionally biased toward low complexity: residues 731 to 818 (QHQL…PGRS) and 827 to 836 (PNMPGAGFMG).

The protein belongs to the Mediator complex subunit 25 family. Component of the Mediator complex. Interacts with the transcription factors BBX20, RAP2-2, ERF1B, ERF091, ERF095, ERF098, ERF109, HB29, PHL1, DREB2A, ABI5 and MYC2. Interacts with the E3 ubiquitin-protein ligases MBR1 and MBR2.

It is found in the nucleus. Functionally, component of the Mediator complex, a coactivator involved in the regulated transcription of nearly all RNA polymerase II-dependent genes. Mediator functions as a bridge to convey information from gene-specific regulatory proteins to the basal RNA polymerase II transcription machinery. Mediator is recruited to promoters by direct interactions with regulatory proteins and serves as a scaffold for the assembly of a functional preinitiation complex with RNA polymerase II and the general transcription factors. Positive regulator of shade avoidance and of jasmonate signaling. Acts in repression of PhyB-mediated light signaling and regulates the expression of FLOWERING LOCUS T (FT) and of CONSTANS (CO). This chain is Mediator of RNA polymerase II transcription subunit 25 (MED25), found in Arabidopsis thaliana (Mouse-ear cress).